A 76-amino-acid chain; its full sequence is MSFQEQQCKQPCQPPPVCPPPKCPEPCPLPKCPEPCPPPKCPEPCPEPCLPSPCQQKCPPVQTPPPCQQKCPPKSK.

Tandem repeats lie at residues 21–29 (PKCPEPCPL), 30–38 (PKCPEPCPP), and 39–47 (PKCPEPCPE). Residues 21-47 (PKCPEPCPLPKCPEPCPPPKCPEPCPE) form a 3 X 9 AA approximate tandem repeats region. The disordered stretch occupies residues 55–76 (QQKCPPVQTPPPCQQKCPPKSK).

This sequence belongs to the cornifin (SPRR) family. As to expression, expressed in uterus.

The protein resides in the cytoplasm. Cross-linked envelope protein of keratinocytes. It is a keratinocyte protein that first appears in the cell cytosol, but ultimately becomes cross-linked to membrane proteins by transglutaminase. All that results in the formation of an insoluble envelope beneath the plasma membrane. This Mus musculus (Mouse) protein is Small proline-rich protein 2G (Sprr2g).